A 139-amino-acid chain; its full sequence is Large ribosomal subunit protein uL16 (139 aa).

The span at 1 to 11 (MLQPKRTKYRK) shows a compositional bias: basic residues. Positions 1-30 (MLQPKRTKYRKPFLQSHDKRKAHKGNKVSF) are disordered.

This sequence belongs to the universal ribosomal protein uL16 family. As to quaternary structure, part of the 50S ribosomal subunit.

Its function is as follows. Binds 23S rRNA and is also seen to make contacts with the A and possibly P site tRNAs. The protein is Large ribosomal subunit protein uL16 of Mycoplasmopsis synoviae (strain 53) (Mycoplasma synoviae).